We begin with the raw amino-acid sequence, 591 residues long: Tricyclene synthase, chloroplastic (591 aa).

Residues 1–45 constitute a chloroplast transit peptide; the sequence is MATLLQIGSGVIYSNALRKTLRRPQSSTCIIVTETTPCNKSPTVQ. (2E)-geranyl diphosphate-binding residues include arginine 302, aspartate 339, aspartate 343, arginine 481, and asparagine 484. Mg(2+)-binding residues include aspartate 339 and aspartate 343. The DDXXD motif signature appears at 339-343; that stretch reads DDIYD. Positions 484, 488, and 492 each coordinate Mg(2+).

The protein belongs to the terpene synthase family. Tpsb subfamily. The cofactor is Mg(2+). Mn(2+) serves as cofactor. Predominantly expressed in flowers but also in leaves, siliques and in stems.

The protein resides in the plastid. It localises to the chloroplast stroma. It catalyses the reaction (2E)-geranyl diphosphate = beta-myrcene + diphosphate. It carries out the reaction (2E)-geranyl diphosphate = tricyclene + diphosphate. The enzyme catalyses (2E)-geranyl diphosphate = (E)-beta-ocimene + diphosphate. The protein operates within secondary metabolite biosynthesis; terpenoid biosynthesis. Functionally, involved in monoterpene (C10) biosynthesis. The major product is beta-myrcene (56%) followed by (E)-beta-ocimene (20%) and minor amounts (less than 5%) of the cyclic monoterpene (-)-limonene, (+)-limonene, 2-carene and tricyclene. This is Tricyclene synthase, chloroplastic from Arabidopsis thaliana (Mouse-ear cress).